An 80-amino-acid polypeptide reads, in one-letter code: Growth factor (80 aa).

An N-terminal signal peptide occupies residues 1–19; sequence MATRNLVASLLCIMYAVHA. Residues 29-73 form the EGF-like domain; that stretch reads HVKVCNHDYENYCLNNGTCFTIALDNVSITPFCVCRINYEGSRCQ. Intrachain disulfides connect C33/C47, C41/C61, and C63/C72. 2 N-linked (GlcNAc...) asparagine; by host glycosylation sites follow: N44 and N54.

It is found in the secreted. The polypeptide is Growth factor (Oryctolagus cuniculus (Rabbit)).